A 366-amino-acid polypeptide reads, in one-letter code: Chorismate synthase (366 aa).

Residues Arg48 and Arg54 each contribute to the NADP(+) site. FMN-binding positions include 125–127 (RSS), 238–239 (NA), Gly278, 293–297 (KPTSS), and Arg319.

The protein belongs to the chorismate synthase family. In terms of assembly, homotetramer. Requires FMNH2 as cofactor.

The catalysed reaction is 5-O-(1-carboxyvinyl)-3-phosphoshikimate = chorismate + phosphate. It functions in the pathway metabolic intermediate biosynthesis; chorismate biosynthesis; chorismate from D-erythrose 4-phosphate and phosphoenolpyruvate: step 7/7. Its function is as follows. Catalyzes the anti-1,4-elimination of the C-3 phosphate and the C-6 proR hydrogen from 5-enolpyruvylshikimate-3-phosphate (EPSP) to yield chorismate, which is the branch point compound that serves as the starting substrate for the three terminal pathways of aromatic amino acid biosynthesis. This reaction introduces a second double bond into the aromatic ring system. This chain is Chorismate synthase, found in Paraburkholderia xenovorans (strain LB400).